The primary structure comprises 1317 residues: Clustered mitochondria protein homolog (1317 aa).

The 245-residue stretch at 382–626 (DITRSQESYL…RVTPLDVTWQ (245 aa)) folds into the Clu domain. The segment covering 669-689 (KAQEEAANKEQSSEVTESKEQ) has biased composition (basic and acidic residues). 2 disordered regions span residues 669 to 700 (KAQE…EALD) and 939 to 966 (ANGV…PSRA). 3 TPR repeats span residues 1040–1073 (AKLY…TERT), 1082–1115 (ILAY…WKII), and 1124–1157 (ITTM…CESL). Disordered stretches follow at residues 1252–1273 (VQPQ…ANAS) and 1288–1317 (GGDA…KSSA).

It belongs to the CLU family. In terms of assembly, may associate with the eukaryotic translation initiation factor 3 (eIF-3) complex.

The protein localises to the cytoplasm. MRNA-binding protein involved in proper cytoplasmic distribution of mitochondria. The chain is Clustered mitochondria protein homolog from Neosartorya fischeri (strain ATCC 1020 / DSM 3700 / CBS 544.65 / FGSC A1164 / JCM 1740 / NRRL 181 / WB 181) (Aspergillus fischerianus).